We begin with the raw amino-acid sequence, 298 residues long: Lipoyl synthase (298 aa).

Positions 40, 45, 51, 67, 71, 74, and 280 each coordinate [4Fe-4S] cluster. The Radical SAM core domain maps to 53 to 269; it reads AVRKTATFMI…KEIALSKGFS (217 aa).

Belongs to the radical SAM superfamily. Lipoyl synthase family. It depends on [4Fe-4S] cluster as a cofactor.

The protein localises to the cytoplasm. It catalyses the reaction [[Fe-S] cluster scaffold protein carrying a second [4Fe-4S](2+) cluster] + N(6)-octanoyl-L-lysyl-[protein] + 2 oxidized [2Fe-2S]-[ferredoxin] + 2 S-adenosyl-L-methionine + 4 H(+) = [[Fe-S] cluster scaffold protein] + N(6)-[(R)-dihydrolipoyl]-L-lysyl-[protein] + 4 Fe(3+) + 2 hydrogen sulfide + 2 5'-deoxyadenosine + 2 L-methionine + 2 reduced [2Fe-2S]-[ferredoxin]. The protein operates within protein modification; protein lipoylation via endogenous pathway; protein N(6)-(lipoyl)lysine from octanoyl-[acyl-carrier-protein]. Functionally, catalyzes the radical-mediated insertion of two sulfur atoms into the C-6 and C-8 positions of the octanoyl moiety bound to the lipoyl domains of lipoate-dependent enzymes, thereby converting the octanoylated domains into lipoylated derivatives. In Bacillus cereus (strain B4264), this protein is Lipoyl synthase.